Here is a 101-residue protein sequence, read N- to C-terminus: RNA-binding protein Hfq (101 aa).

A Sm domain is found at 9–68 (DPFLNALRRERVPVSIYLVNGIKLQGQIESFDQFVILLKNTVSQMVYKHAISTVVPSRPV). Residues 63–101 (VPSRPVSHHNNNPSGGSSNYHHGSTPASQPSQPESDDAE) are disordered. The span at 70-86 (HHNNNPSGGSSNYHHGS) shows a compositional bias: low complexity.

The protein belongs to the Hfq family. As to quaternary structure, homohexamer.

In terms of biological role, RNA chaperone that binds small regulatory RNA (sRNAs) and mRNAs to facilitate mRNA translational regulation in response to envelope stress, environmental stress and changes in metabolite concentrations. Also binds with high specificity to tRNAs. This is RNA-binding protein Hfq from Sodalis glossinidius (strain morsitans).